The chain runs to 286 residues: ATP synthase gamma chain (286 aa).

The protein belongs to the ATPase gamma chain family. F-type ATPases have 2 components, CF(1) - the catalytic core - and CF(0) - the membrane proton channel. CF(1) has five subunits: alpha(3), beta(3), gamma(1), delta(1), epsilon(1). CF(0) has three main subunits: a, b and c.

Its subcellular location is the cell inner membrane. In terms of biological role, produces ATP from ADP in the presence of a proton gradient across the membrane. The gamma chain is believed to be important in regulating ATPase activity and the flow of protons through the CF(0) complex. This chain is ATP synthase gamma chain, found in Shewanella oneidensis (strain ATCC 700550 / JCM 31522 / CIP 106686 / LMG 19005 / NCIMB 14063 / MR-1).